Consider the following 526-residue polypeptide: Probable polyol transporter 4 (526 aa).

Disordered stretches follow at residues 1 to 21 (MMKN…AVSV) and 28 to 47 (YQRM…AEAR). A compositionally biased stretch (basic and acidic residues) spans 29–47 (QRMDSDAEESQNHREAEAR). The next 12 helical transmembrane spans lie at 63 to 83 (SLNN…VLFI), 92 to 112 (VQTE…SLAG), 125 to 145 (MALA…APSF), 153 to 173 (TLAG…IAEI), 180 to 200 (GFFT…GYVS), 215 to 235 (IMLA…CVIP), 300 to 320 (MLIV…DATV), 340 to 360 (AATV…TFLI), 371 to 391 (VSTI…TFLG), 395 to 415 (LGIT…SIGM), 437 to 457 (ALGA…FLSV), and 465 to 485 (GTFF…YVLV).

Belongs to the major facilitator superfamily. Sugar transporter (TC 2.A.1.1) family.

It is found in the membrane. In terms of biological role, plasma membrane sugar-proton symporter. The protein is Probable polyol transporter 4 (PLT4) of Arabidopsis thaliana (Mouse-ear cress).